The chain runs to 78 residues: Large ribosomal subunit protein bL28 (78 aa).

This sequence belongs to the bacterial ribosomal protein bL28 family.

The sequence is that of Large ribosomal subunit protein bL28 from Pasteurella multocida (strain Pm70).